We begin with the raw amino-acid sequence, 734 residues long: MKIILTLSIFLICFLQLGQSVIDPSQNEVMSDLLFNLYGYDKSLDPCNSNSVECDDINSTSTIKTVISLNLPTPLQEYVITQDLTPLQNLTYMELYEKIYLTLSFFKNINKLTQLETIVTLSFNVTIPDDTIFPASLETFSIYKPSVPLSIAIFGSNIKNLYVNSPLTGYSIPTLINVNPYLENLQLPVTYYSGFPSNISLAFPNLQYLTIYVNNDMDQNNYHNFSISNIGVFKNLKGLDIEFTDSYNPQEFSINSFLSNVPVIDSLYIYGQGVTIDPSVGIIDLSYVKSKKFLSINIQESSLLNNCKGKSFKSPKKAYFRSNYNTFSYACIDFSNLAYFYDYYNEYEQYLPNIDNAPLLNEIYISESVVVGDIPESYCRINYLGLNYNQLNGTAPSCILCLGGNRGGDIVLPNPLLNFNKTSEPYCPTFKIDQNYTNLVATDGIGKLIITGTNLGWYGNDITPITANSKLAITIPKGVGTNKSITVTFQNGEQRTFNYSYVPPFIKSYGFLELDSNKYLTINGTGFDFENPNIITINGQQITFSIALGGGDNDGLIALPIDELPNFDSETKFTVSTLVGGQSSNEVTFYYFNSINITEEKLVLNNTGGSVDINGSFGTNNISLVSISINGTNCLVTSYTNSKLTIQYPSKQVGDNYVLTLNVGGYAVNLVVEYIEGGETPTPSTTPSTTPSTTPSTTPSSTPTQSPGDDGSTSSTLSISFYLITLLLLTQQFI.

The signal sequence occupies residues 1–20 (MKIILTLSIFLICFLQLGQS). N-linked (GlcNAc...) asparagine glycans are attached at residues asparagine 58, asparagine 89, asparagine 124, asparagine 198, asparagine 224, asparagine 392, asparagine 420, asparagine 435, asparagine 482, asparagine 498, asparagine 523, asparagine 596, asparagine 605, asparagine 614, asparagine 621, and asparagine 630. The region spanning 504-592 (PFIKSYGFLE…SSNEVTFYYF (89 aa)) is the IPT/TIG domain. Positions 678–712 (GETPTPSTTPSTTPSTTPSTTPSSTPTQSPGDDGS) are disordered. The segment covering 680–712 (TPTPSTTPSTTPSTTPSTTPSSTPTQSPGDDGS) has biased composition (low complexity). 4 tandem repeats follow at residues 683–686 (PSTT), 687–690 (PSTT), 691–694 (PSTT), and 695–698 (PSTT). The segment at 683-698 (PSTTPSTTPSTTPSTT) is 4 X 4 AA tandem repeats of P-S-T-T. Glycine 708 is lipidated: GPI-like-anchor amidated glycine. A propeptide spans 709 to 734 (DDGSTSSTLSISFYLITLLLLTQQFI) (removed in mature form).

In terms of processing, the sugar chains may play important roles in cell fusion. Post-translationally, the GPI-like-anchor contains a phosphoceramide group, rather than a phosphatidyl group.

The protein localises to the cell membrane. Functionally, involved in the sexual cell fusion of D.discoideum. The sequence is that of Cell surface glycoprotein gp138B (GP138B) from Dictyostelium discoideum (Social amoeba).